Consider the following 274-residue polypeptide: Light-independent protochlorophyllide reductase iron-sulfur ATP-binding protein (274 aa).

ATP-binding positions include 12-17 (GIGKST) and K41. S16 contacts Mg(2+). Residues C97 and C131 each coordinate [4Fe-4S] cluster.

It belongs to the NifH/BchL/ChlL family. As to quaternary structure, homodimer. Protochlorophyllide reductase is composed of three subunits; BchL, BchN and BchB. The cofactor is [4Fe-4S] cluster.

The catalysed reaction is chlorophyllide a + oxidized 2[4Fe-4S]-[ferredoxin] + 2 ADP + 2 phosphate = protochlorophyllide a + reduced 2[4Fe-4S]-[ferredoxin] + 2 ATP + 2 H2O. The protein operates within porphyrin-containing compound metabolism; bacteriochlorophyll biosynthesis (light-independent). Component of the dark-operative protochlorophyllide reductase (DPOR) that uses Mg-ATP and reduced ferredoxin to reduce ring D of protochlorophyllide (Pchlide) to form chlorophyllide a (Chlide). This reaction is light-independent. The L component serves as a unique electron donor to the NB-component of the complex, and binds Mg-ATP. The chain is Light-independent protochlorophyllide reductase iron-sulfur ATP-binding protein from Chloroherpeton thalassium (strain ATCC 35110 / GB-78).